The chain runs to 347 residues: D-alanine--D-alanine ligase (347 aa).

An ATP-grasp domain is found at 138-339; sequence KILCSHAGIP…YSQVIETILA (202 aa). 171-226 serves as a coordination point for ATP; it reads SDRFTFPLFVKPVDAGSSFGCTFVDFFEQLPVAIEHALQHGKSAIVEPALDAPEVF. 3 residues coordinate Mg(2+): D296, E308, and N310.

The protein belongs to the D-alanine--D-alanine ligase family. Mg(2+) serves as cofactor. Requires Mn(2+) as cofactor.

The protein resides in the cytoplasm. It catalyses the reaction 2 D-alanine + ATP = D-alanyl-D-alanine + ADP + phosphate + H(+). Its pathway is cell wall biogenesis; peptidoglycan biosynthesis. In terms of biological role, cell wall formation. The chain is D-alanine--D-alanine ligase from Tropheryma whipplei (strain TW08/27) (Whipple's bacillus).